The sequence spans 287 residues: Bifunctional protein FolD (287 aa).

Residues 165–167, threonine 192, and valine 233 contribute to the NADP(+) site; that span reads GRG.

Belongs to the tetrahydrofolate dehydrogenase/cyclohydrolase family. Homodimer.

It catalyses the reaction (6R)-5,10-methylene-5,6,7,8-tetrahydrofolate + NADP(+) = (6R)-5,10-methenyltetrahydrofolate + NADPH. The enzyme catalyses (6R)-5,10-methenyltetrahydrofolate + H2O = (6R)-10-formyltetrahydrofolate + H(+). Its pathway is one-carbon metabolism; tetrahydrofolate interconversion. Functionally, catalyzes the oxidation of 5,10-methylenetetrahydrofolate to 5,10-methenyltetrahydrofolate and then the hydrolysis of 5,10-methenyltetrahydrofolate to 10-formyltetrahydrofolate. The protein is Bifunctional protein FolD of Cutibacterium acnes (strain DSM 16379 / KPA171202) (Propionibacterium acnes).